The sequence spans 416 residues: Squalene synthase (416 aa).

Helical transmembrane passes span 285–304 (VINF…NACY) and 386–406 (FISY…FLIA).

It belongs to the phytoene/squalene synthase family. The cofactor is Mg(2+).

Its subcellular location is the endoplasmic reticulum membrane. It catalyses the reaction 2 (2E,6E)-farnesyl diphosphate + NADPH + H(+) = squalene + 2 diphosphate + NADP(+). It carries out the reaction 2 (2E,6E)-farnesyl diphosphate + NADH + H(+) = squalene + 2 diphosphate + NAD(+). The protein operates within terpene metabolism; lanosterol biosynthesis; lanosterol from farnesyl diphosphate: step 1/3. This chain is Squalene synthase (fdfT), found in Dictyostelium discoideum (Social amoeba).